Here is a 245-residue protein sequence, read N- to C-terminus: 5'-nucleotidase SurE (245 aa).

Asp-8, Asp-9, Ser-39, and Asn-91 together coordinate a divalent metal cation.

The protein belongs to the SurE nucleotidase family. A divalent metal cation is required as a cofactor.

The protein resides in the cytoplasm. It catalyses the reaction a ribonucleoside 5'-phosphate + H2O = a ribonucleoside + phosphate. In terms of biological role, nucleotidase that shows phosphatase activity on nucleoside 5'-monophosphates. This Janthinobacterium sp. (strain Marseille) (Minibacterium massiliensis) protein is 5'-nucleotidase SurE.